Here is a 512-residue protein sequence, read N- to C-terminus: Lysine--tRNA ligase (512 aa).

Mg(2+) is bound by residues Glu408 and Glu415.

This sequence belongs to the class-II aminoacyl-tRNA synthetase family. Homodimer. Requires Mg(2+) as cofactor.

Its subcellular location is the cytoplasm. It catalyses the reaction tRNA(Lys) + L-lysine + ATP = L-lysyl-tRNA(Lys) + AMP + diphosphate. The polypeptide is Lysine--tRNA ligase (Prochlorococcus marinus subsp. pastoris (strain CCMP1986 / NIES-2087 / MED4)).